The sequence spans 337 residues: Holliday junction branch migration complex subunit RuvB (337 aa).

The large ATPase domain (RuvB-L) stretch occupies residues M1–Y182. ATP-binding positions include L21, R22, G63, K66, T67, T68, E129–Y131, R172, Y182, and R219. Residue T67 participates in Mg(2+) binding. The interval K183 to G253 is small ATPAse domain (RuvB-S). The head domain (RuvB-H) stretch occupies residues H256 to N337. DNA-binding residues include R311 and R316.

Belongs to the RuvB family. In terms of assembly, homohexamer. Forms an RuvA(8)-RuvB(12)-Holliday junction (HJ) complex. HJ DNA is sandwiched between 2 RuvA tetramers; dsDNA enters through RuvA and exits via RuvB. An RuvB hexamer assembles on each DNA strand where it exits the tetramer. Each RuvB hexamer is contacted by two RuvA subunits (via domain III) on 2 adjacent RuvB subunits; this complex drives branch migration. In the full resolvosome a probable DNA-RuvA(4)-RuvB(12)-RuvC(2) complex forms which resolves the HJ.

It is found in the cytoplasm. The catalysed reaction is ATP + H2O = ADP + phosphate + H(+). The RuvA-RuvB-RuvC complex processes Holliday junction (HJ) DNA during genetic recombination and DNA repair, while the RuvA-RuvB complex plays an important role in the rescue of blocked DNA replication forks via replication fork reversal (RFR). RuvA specifically binds to HJ cruciform DNA, conferring on it an open structure. The RuvB hexamer acts as an ATP-dependent pump, pulling dsDNA into and through the RuvAB complex. RuvB forms 2 homohexamers on either side of HJ DNA bound by 1 or 2 RuvA tetramers; 4 subunits per hexamer contact DNA at a time. Coordinated motions by a converter formed by DNA-disengaged RuvB subunits stimulates ATP hydrolysis and nucleotide exchange. Immobilization of the converter enables RuvB to convert the ATP-contained energy into a lever motion, pulling 2 nucleotides of DNA out of the RuvA tetramer per ATP hydrolyzed, thus driving DNA branch migration. The RuvB motors rotate together with the DNA substrate, which together with the progressing nucleotide cycle form the mechanistic basis for DNA recombination by continuous HJ branch migration. Branch migration allows RuvC to scan DNA until it finds its consensus sequence, where it cleaves and resolves cruciform DNA. This chain is Holliday junction branch migration complex subunit RuvB, found in Acholeplasma laidlawii (strain PG-8A).